Reading from the N-terminus, the 204-residue chain is MKKYLNLTALLLVGISNVTWANAVNELQNRLNKIDVLSADYTQQVTDAQGKKIQQGSGKIQLKRPNLFRMDNETPQESQIIADGKTLWFYDPFVEQVTANWVEDTLSDTPFVLLTSNNPSHWQQYIVEQKSDTFIIKPKSKKSTIKQFNIRIEKDGVLKNFSTIEKDGQSNLYILRKITNPALNDAIFTFTLPKGVEFDDQRKK.

The signal sequence occupies residues 1–21 (MKKYLNLTALLLVGISNVTWA).

Belongs to the LolA family. As to quaternary structure, monomer.

It localises to the periplasm. Participates in the translocation of lipoproteins from the inner membrane to the outer membrane. Only forms a complex with a lipoprotein if the residue after the N-terminal Cys is not an aspartate (The Asp acts as a targeting signal to indicate that the lipoprotein should stay in the inner membrane). This chain is Outer-membrane lipoprotein carrier protein, found in Histophilus somni (strain 2336) (Haemophilus somnus).